The primary structure comprises 397 residues: 1-deoxy-D-xylulose 5-phosphate reductoisomerase (397 aa).

The NADPH site is built by Thr10, Gly11, Ser12, Ile13, Gln38, and Asn123. A 1-deoxy-D-xylulose 5-phosphate-binding site is contributed by Lys124. Glu125 is an NADPH binding site. Position 149 (Asp149) interacts with Mn(2+). 1-deoxy-D-xylulose 5-phosphate is bound by residues Ser150, Glu151, Ser185, and His208. Glu151 is a binding site for Mn(2+). Gly214 serves as a coordination point for NADPH. Residues Ser221, Asn226, Lys227, and Glu230 each coordinate 1-deoxy-D-xylulose 5-phosphate. Residue Glu230 coordinates Mn(2+).

Belongs to the DXR family. The cofactor is Mg(2+). Mn(2+) is required as a cofactor.

The catalysed reaction is 2-C-methyl-D-erythritol 4-phosphate + NADP(+) = 1-deoxy-D-xylulose 5-phosphate + NADPH + H(+). Its pathway is isoprenoid biosynthesis; isopentenyl diphosphate biosynthesis via DXP pathway; isopentenyl diphosphate from 1-deoxy-D-xylulose 5-phosphate: step 1/6. Functionally, catalyzes the NADPH-dependent rearrangement and reduction of 1-deoxy-D-xylulose-5-phosphate (DXP) to 2-C-methyl-D-erythritol 4-phosphate (MEP). In Idiomarina loihiensis (strain ATCC BAA-735 / DSM 15497 / L2-TR), this protein is 1-deoxy-D-xylulose 5-phosphate reductoisomerase.